Here is a 300-residue protein sequence, read N- to C-terminus: ATP-dependent (S)-NAD(P)H-hydrate dehydratase (300 aa).

Residues 6 to 297 (YAGKIKEFIP…GCIHQSFTSL (292 aa)) form the YjeF C-terminal domain. Residues Gly106 and 158-164 (NEVEFKR) contribute to the (6S)-NADPHX site. ATP is bound by residues 188-192 (KGSTD) and 218-227 (GSNRRCGGQG). Asp228 provides a ligand contact to (6S)-NADPHX.

The protein belongs to the NnrD/CARKD family. Mg(2+) is required as a cofactor.

It catalyses the reaction (6S)-NADHX + ATP = ADP + phosphate + NADH + H(+). It carries out the reaction (6S)-NADPHX + ATP = ADP + phosphate + NADPH + H(+). Functionally, catalyzes the dehydration of the S-form of NAD(P)HX at the expense of ATP, which is converted to ADP. Together with NAD(P)HX epimerase, which catalyzes the epimerization of the S- and R-forms, the enzyme allows the repair of both epimers of NAD(P)HX, a damaged form of NAD(P)H that is a result of enzymatic or heat-dependent hydration. This Pediculus humanus subsp. corporis (Body louse) protein is ATP-dependent (S)-NAD(P)H-hydrate dehydratase.